The chain runs to 218 residues: MTALSEQAVDYNLLKNRFRGFFPVIIDVETAGFNAQTDALLELAAITLKMDENGLLVPDEKCHFHIQPFEGANINPESLKFNGIDIDNPLRGAISENVAMSELFKMVRHGQKKADCQRSVIVAHNATFDQSFVMAAAERTKIKRNPFHPFSIFDTATLSGFMFGQTVLVKGCQVANISFDGKKAHSALYDAERTAELFCYMVNHLKKLGGFPHVAINS.

The region spanning 24–198 (VIIDVETAGF…YDAERTAELF (175 aa)) is the Exonuclease domain. Residues D27, E29, H185, and D190 each coordinate Mg(2+). Catalysis depends on H185, which acts as the Proton donor/acceptor.

The protein belongs to the RNase T family. As to quaternary structure, homodimer. Mg(2+) is required as a cofactor.

Its function is as follows. Trims short 3' overhangs of a variety of RNA species, leaving a one or two nucleotide 3' overhang. Responsible for the end-turnover of tRNA: specifically removes the terminal AMP residue from uncharged tRNA (tRNA-C-C-A). Also appears to be involved in tRNA biosynthesis. The chain is Ribonuclease T from Histophilus somni (strain 129Pt) (Haemophilus somnus).